The chain runs to 854 residues: MNIQPNTFFLKAMLTLLNIKGNNMCWAHKKNMFERFTEKAVKVIMLAQEEARRLGHNFVGTEQILLGILGEGTGLAAKALKSMGITLKDARIEVEKIIGRGSGFVAIEIPFTPRAKKILELAIEESRILTHNYVGTEHLLLGLIKEGEGVAARVLENLGVDLPKLRSNIIRMIGETSEVSVGATSGRSKVPTLEEFGTNLTQMAVEGKLDPVVGRAKEIERVVQILGRRTKNNPVLIGEPGVGKTAIAEGLAQRIINNEVPDTLEDKKVITLDVSLLVAGTKYRGEFEERLKKIMDEIRMADNVILVIDEVHTLIGAGAAEGAIDAANILKPALARGELQCIGATTLEEYRKHIEKDAALERRFQPVMVEEPTVEETIEILRGLRDRYEAHHRLKISDSAIVAAAKLSDQYIADRFLPDKAIDLVDEASSRVRLMNYKLPPSAEYLDEELRHIQKIKNELIRSGDFEEASQFREREIEVKVQMAALMKAKKEAIEEELALNPPIVNEDDIANIVSSWTGIPVSKLTKSESEKLLHMEETLHSRIVGQNEAVIAVSKAIRRARVGLKNPNRPIASFIFSGPTGVGKTELTKAMASYFFGSEEAMVRLDMSEYMERHTVSKLIGSPPGYVGYNEGGQLTEAVRKRPYTVVLFDEIEKAHPDVFNLLLQILEDGRLTDSKGRTIDFKNTLLIMTSNIGSKVIEKKGGGLGFELEENIEELQYSRMRNLVNEELKQYFRPEFLNRVDEIIVFRQLTKDEVRDIAHIMLREIFERVKQQGISLQVTERFKNLLIEEGYNPSYGARPLRRALVRLLEDSLAEEVLSGKIKEGDNAMIDVDENKQVKILLGNSNNQHAFLA.

The 143-residue stretch at 33–175 (FERFTEKAVK…RSNIIRMIGE (143 aa)) folds into the Clp R domain. Repeat regions lie at residues 36-101 (FTEK…IGRG) and 111-175 (FTPR…MIGE). Residue 238 to 245 (GEPGVGKT) coordinates ATP. One can recognise a UVR domain in the interval 447 to 482 (DEELRHIQKIKNELIRSGDFEEASQFREREIEVKVQ). 579 to 586 (GPTGVGKT) lines the ATP pocket.

It belongs to the ClpA/ClpB family.

The protein resides in the plastid. It localises to the chloroplast. May interact with a ClpP-like protease involved in degradation of denatured proteins in the chloroplast. This Cyanidium caldarium (Red alga) protein is ATP-dependent Clp protease ATP-binding subunit ClpA homolog (clpC).